Here is a 258-residue protein sequence, read N- to C-terminus: Pyridoxal phosphate homeostasis protein (258 aa).

Residue lysine 47 is modified to N6-(pyridoxal phosphate)lysine.

This sequence belongs to the pyridoxal phosphate-binding protein YggS/PROSC family.

Functionally, pyridoxal 5'-phosphate (PLP)-binding protein, which is involved in PLP homeostasis. In Mycobacterium bovis (strain ATCC BAA-935 / AF2122/97), this protein is Pyridoxal phosphate homeostasis protein.